The chain runs to 247 residues: MRQSEWLDTVLGLLPGCPKGLPGFWVENEAQASGQALELVLGWHDDCLGLWRPGGKQTPLTVSFCDGKQGYRLTPERVRHERLIKALGKPKDDRIRVLDATAGLGRDAALMAQAGFQVMLAERSPILHAMLADGLQRAPASLVANMQLLACADSKIAEPSALHAVYLDPMFPAREKSAAVKKDLQWLQRLCPYPDEVEEQQLLDWARALGASRVVVKRPVKAGFLAGVTPSFSQKGKAVRFDIYTCP.

Residues 106 to 107 (RD), 122 to 123 (ER), and D168 each bind S-adenosyl-L-methionine.

It belongs to the methyltransferase superfamily. RsmJ family.

The protein localises to the cytoplasm. The catalysed reaction is guanosine(1516) in 16S rRNA + S-adenosyl-L-methionine = N(2)-methylguanosine(1516) in 16S rRNA + S-adenosyl-L-homocysteine + H(+). Specifically methylates the guanosine in position 1516 of 16S rRNA. This is Ribosomal RNA small subunit methyltransferase J from Alcanivorax borkumensis (strain ATCC 700651 / DSM 11573 / NCIMB 13689 / SK2).